Consider the following 203-residue polypeptide: Probable chemoreceptor glutamine deamidase CheD (203 aa).

The protein belongs to the CheD family.

The catalysed reaction is L-glutaminyl-[protein] + H2O = L-glutamyl-[protein] + NH4(+). Functionally, probably deamidates glutamine residues to glutamate on methyl-accepting chemotaxis receptors (MCPs), playing an important role in chemotaxis. This Methylobacillus flagellatus (strain ATCC 51484 / DSM 6875 / VKM B-1610 / KT) protein is Probable chemoreceptor glutamine deamidase CheD.